Reading from the N-terminus, the 382-residue chain is Mannitol-1-phosphate 5-dehydrogenase (382 aa).

4-15 (AVHFGAGNIGRG) contacts NAD(+).

The protein belongs to the mannitol dehydrogenase family.

It catalyses the reaction D-mannitol 1-phosphate + NAD(+) = beta-D-fructose 6-phosphate + NADH + H(+). The polypeptide is Mannitol-1-phosphate 5-dehydrogenase (Vibrio parahaemolyticus serotype O3:K6 (strain RIMD 2210633)).